A 345-amino-acid chain; its full sequence is V-type proton ATPase subunit d (345 aa).

M1 carries the N-acetylmethionine modification.

Belongs to the V-ATPase V0D/AC39 subunit family. As to quaternary structure, V-ATPase is a heteromultimeric enzyme composed of a peripheral catalytic V1 complex (components A to H) attached to an integral membrane V0 proton pore complex (components: a, c, c', c'', d, e, f and VOA1).

It localises to the vacuole membrane. Its function is as follows. Subunit of the V0 complex of vacuolar(H+)-ATPase (V-ATPase), a multisubunit enzyme composed of a peripheral complex (V1) that hydrolyzes ATP and a membrane integral complex (V0) that translocates protons. V-ATPase is responsible for acidifying and maintaining the pH of intracellular compartments. This subunit is a non-integral membrane component of the membrane pore domain and is required for proper assembly of the V0 sector. Might be involved in the regulated assembly of V1 subunits onto the membrane sector or alternatively may prevent the passage of protons through V0 pores. This chain is V-type proton ATPase subunit d, found in Saccharomyces cerevisiae (strain ATCC 204508 / S288c) (Baker's yeast).